Consider the following 224-residue polypeptide: MNKLMSWVSVLIILPEAFAQTDLRGKVFVFPRESSTDHVTLITKLEKPLKNLTLCLRAYSDLSRGYSLFSYNIHSKDNELLVFKNGIGEYSLYIGKTKVTVRATEKFPSPVHICTSWESSTGIAEFWINGKPLVKRGLKQGYAVGAHPKIVLGQEQDSYGGGFDKNQSFMGEIGDLYMWDSVLSPEEILLVYQGSSSISPTILDWQALKYEIKGYVIVKPMVWG.

The signal sequence occupies residues M1 to A19. A Pentraxin (PTX) domain is found at R24–G224. An N-linked (GlcNAc...) asparagine glycan is attached at N51. C55 and C114 are joined by a disulfide. The Ca(2+) site is built by D77, N78, E155, Q156, and D157. N166 carries N-linked (GlcNAc...) asparagine glycosylation. Position 167 (Q167) interacts with Ca(2+).

The protein belongs to the pentraxin family. Homopentamer. Pentraxin (or pentaxin) have a discoid arrangement of 5 non-covalently bound subunits. Ca(2+) is required as a cofactor.

It localises to the secreted. The sequence is that of Serum amyloid P-component (APCS) from Bos taurus (Bovine).